The primary structure comprises 1427 residues: DNA-directed RNA polymerase subunit beta' (1427 aa).

Positions 66, 68, 81, and 84 each coordinate Zn(2+). Residues aspartate 472, aspartate 474, and aspartate 476 each contribute to the Mg(2+) site. The Zn(2+) site is built by cysteine 815, cysteine 889, cysteine 896, and cysteine 899.

This sequence belongs to the RNA polymerase beta' chain family. As to quaternary structure, the RNAP catalytic core consists of 2 alpha, 1 beta, 1 beta' and 1 omega subunit. When a sigma factor is associated with the core the holoenzyme is formed, which can initiate transcription. The cofactor is Mg(2+). It depends on Zn(2+) as a cofactor.

It carries out the reaction RNA(n) + a ribonucleoside 5'-triphosphate = RNA(n+1) + diphosphate. Its function is as follows. DNA-dependent RNA polymerase catalyzes the transcription of DNA into RNA using the four ribonucleoside triphosphates as substrates. In Bacteroides fragilis (strain ATCC 25285 / DSM 2151 / CCUG 4856 / JCM 11019 / LMG 10263 / NCTC 9343 / Onslow / VPI 2553 / EN-2), this protein is DNA-directed RNA polymerase subunit beta'.